We begin with the raw amino-acid sequence, 238 residues long: MSEVTTAEFNEEGKYLRKIRSFVLREGRLTKGQAQAIESQWPTMGLDYSPTPLVLSDVFGREADTVLEIGFGMGASLVQMAKDAPEQNFIGIEVHKPGVGSCLSDAAIAGVTNLRVYHHDAMEVLEHAIADGSLARVQLFFPDPWHKKRHHKRRIVQAEFAELIRRKLKIGGVFHMATDWEEYSEHMLEVMQAAPGYKNQSSDGTVVPRPDHRPLTKFEARGHRLGHGVWDLMFERIA.

Positions 68, 93, 120, and 143 each coordinate S-adenosyl-L-methionine. The active site involves Asp143. Substrate is bound by residues Lys147, Asp179, and 216–219; that span reads TKFE.

It belongs to the class I-like SAM-binding methyltransferase superfamily. TrmB family.

It catalyses the reaction guanosine(46) in tRNA + S-adenosyl-L-methionine = N(7)-methylguanosine(46) in tRNA + S-adenosyl-L-homocysteine. The protein operates within tRNA modification; N(7)-methylguanine-tRNA biosynthesis. Catalyzes the formation of N(7)-methylguanine at position 46 (m7G46) in tRNA. This Shewanella baltica (strain OS223) protein is tRNA (guanine-N(7)-)-methyltransferase.